Here is a 173-residue protein sequence, read N- to C-terminus: dCTP deaminase, dUMP-forming (173 aa).

Residues 93–98, aspartate 111, 119–121, and glutamine 138 each bind dCTP; these read RSSIGR and TLE. Glutamate 121 functions as the Proton donor/acceptor in the catalytic mechanism.

It belongs to the dCTP deaminase family. As to quaternary structure, homotrimer.

The enzyme catalyses dCTP + 2 H2O = dUMP + NH4(+) + diphosphate. Its pathway is pyrimidine metabolism; dUMP biosynthesis; dUMP from dCTP: step 1/1. In terms of biological role, bifunctional enzyme that catalyzes both the deamination of dCTP to dUTP and the hydrolysis of dUTP to dUMP without releasing the toxic dUTP intermediate. The polypeptide is dCTP deaminase, dUMP-forming (Leptospira borgpetersenii serovar Hardjo-bovis (strain JB197)).